A 446-amino-acid polypeptide reads, in one-letter code: MAYPQGYLYQPSASLALYSCPAYSTSVISGPRTEELGRSSSGSAFAPYAGSTAFTSASPGYNSHLPYSADAAAAATFTSYVSSPYDHTTGMAGSIGYHPYAAPLGSYPYGDPAYRKNATRDATATLKAWLNEHRKNPYPTKGEKIMLAIITKMTLTQVSTWFANARRRLKKENKMTWTPRNRSEDEEEDENIDLEKNDDDEPNKPTDKGDSTDTEADHKLINPGEIPCDRFKDETHSKDLDPPLTDSELKEAEERTDLLAEQAKPTTSSPSVLQRGSDLITQEKPSEPGHAASTGNSNVTSVIHSPPSAPKPKLWSLAEIATSSDRCKGSSEASQAAGLSQSTVIASAASPTRSSPQCPLPNNTVLSRPIYYTSPFYPGYTNYSTFGHLHSSHGTNTSSTAHFNGLSQTVLNRAEALVRESKVRSQTQVDLCKDSPYELKKGMSNI.

Positions 117–173 form a DNA-binding region, homeobox; the sequence is NATRDATATLKAWLNEHRKNPYPTKGEKIMLAIITKMTLTQVSTWFANARRRLKKEN. Residues 175–312 form a disordered region; it reads MTWTPRNRSE…IHSPPSAPKP (138 aa). Over residues 184 to 201 the composition is skewed to acidic residues; that stretch reads EDEEEDENIDLEKNDDDE. Basic and acidic residues-rich tracts occupy residues 202–220 and 227–258; these read PNKP…DHKL and PCDR…RTDL. Composition is skewed to polar residues over residues 264–274 and 293–303; these read KPTTSSPSVLQ and STGNSNVTSVI.

This sequence belongs to the TALE/IRO homeobox family.

The protein resides in the nucleus. Functionally, transcription factor. Binds to consensus iroquois binding site (IBS) motifs 5'-ACANNTGT-3' or 5'-ACANNNTGT-3' in regulatory elements of target genes. Required, together with irx7, for hyoid joint formation; they act cell autonomously to repress expression of cartilage matrix genes, such as collagen col2a1a, within immature chondrocytes of the joint interzone. May compete with or modify Sox9a activity, thereby reducing Sox9a-mediated activation of col2a1a. Probably acts in the developing hyoid joint downstream of Bmp signaling. In concert with irx6a, plays a role in visual performance. The protein is Iroquois homeobox protein 5a (irx5a) of Danio rerio (Zebrafish).